The chain runs to 335 residues: Fructose-1,6-bisphosphatase class 1 (335 aa).

Residues E92, D114, L116, and D117 each contribute to the Mg(2+) site. Substrate is bound by residues 117–120, N209, and K275; that span reads DGSS. E281 lines the Mg(2+) pocket.

It belongs to the FBPase class 1 family. Homotetramer. Mg(2+) is required as a cofactor.

The protein resides in the cytoplasm. The catalysed reaction is beta-D-fructose 1,6-bisphosphate + H2O = beta-D-fructose 6-phosphate + phosphate. It functions in the pathway carbohydrate biosynthesis; gluconeogenesis. In Delftia acidovorans (strain DSM 14801 / SPH-1), this protein is Fructose-1,6-bisphosphatase class 1.